A 152-amino-acid polypeptide reads, in one-letter code: Large ribosomal subunit protein uL13 (152 aa).

The disordered stretch occupies residues 129-152; the sequence is EHPHEAQSPEVLDVKSMNKKNTRS.

Belongs to the universal ribosomal protein uL13 family. As to quaternary structure, part of the 50S ribosomal subunit.

Its function is as follows. This protein is one of the early assembly proteins of the 50S ribosomal subunit, although it is not seen to bind rRNA by itself. It is important during the early stages of 50S assembly. The protein is Large ribosomal subunit protein uL13 of Ruegeria sp. (strain TM1040) (Silicibacter sp.).